Here is a 325-residue protein sequence, read N- to C-terminus: Replication factor C small subunit (325 aa).

An ATP-binding site is contributed by 52 to 59; that stretch reads GPAGVGKT.

The protein belongs to the activator 1 small subunits family. RfcS subfamily. In terms of assembly, heteromultimer composed of small subunits (RfcS) and large subunits (RfcL).

Functionally, part of the RFC clamp loader complex which loads the PCNA sliding clamp onto DNA. The sequence is that of Replication factor C small subunit from Natronomonas pharaonis (strain ATCC 35678 / DSM 2160 / CIP 103997 / JCM 8858 / NBRC 14720 / NCIMB 2260 / Gabara) (Halobacterium pharaonis).